A 144-amino-acid chain; its full sequence is Large ribosomal subunit protein uL11 (144 aa).

This sequence belongs to the universal ribosomal protein uL11 family. In terms of assembly, part of the ribosomal stalk of the 50S ribosomal subunit. Interacts with L10 and the large rRNA to form the base of the stalk. L10 forms an elongated spine to which L12 dimers bind in a sequential fashion forming a multimeric L10(L12)X complex. One or more lysine residues are methylated.

Functionally, forms part of the ribosomal stalk which helps the ribosome interact with GTP-bound translation factors. The polypeptide is Large ribosomal subunit protein uL11 (Neisseria meningitidis serogroup C (strain 053442)).